The sequence spans 120 residues: Adult-specific rigid cuticular protein 11.9 (120 aa).

In terms of domain architecture, Chitin-binding type R&amp;R spans 9 to 87 (GGAYNFGYNT…ALAAMAPKAP (79 aa)).

Component of the rigid cuticle of the spider. The sequence is that of Adult-specific rigid cuticular protein 11.9 from Araneus diadematus (European garden spider).